The chain runs to 445 residues: MRSIQRRLSVGLFAVLLVVGLVLAQTGLWLFDQGLRRYFAGNLREEAENLLVAMVRGPNGMQLDEQRLNPAFQRPYSGRYFVIELEKDTWRSRSLWDSELEVPHKKGLVQGLVDGPEEQRLLVFRGHYKRMGQKLRIVVAQDYTPILESFARVQWMGLGAGALALLLVLLLQRLTVRRSLRPLEEVRLQIAQLQQGQRSQLDNQAPEELEPLVEQINHLLAHTEETLKRSRNALGNLGHALKTPLAVLVSLAEREEMARQPELQQVLREQLEQIQQRLGRELGKARLVGEALPGAHFDCAEELPSLCDTLRLIHGPHLQVSWSAPPGLRLPWDREDLLEMLGNLLDNACKWADSEVRLTVAQGEGMVRLKVDDDGPGILPDQRQAVLERGTRLDEQVSGHGLGLGIARDIAEACGGRLSLEDSPLGGLRVSVELPLQKSGRAARA.

Positions 1–24 (MRSIQRRLSVGLFAVLLVVGLVLA) are cleaved as a signal peptide. A helical membrane pass occupies residues 150–170 (FARVQWMGLGAGALALLLVLL). The 52-residue stretch at 177 to 228 (RRSLRPLEEVRLQIAQLQQGQRSQLDNQAPEELEPLVEQINHLLAHTEETLK) folds into the HAMP domain. Residues 236–438 (NLGHALKTPL…RVSVELPLQK (203 aa)) form the Histidine kinase domain. Residue His-239 is modified to Phosphohistidine; by autocatalysis.

It is found in the membrane. The catalysed reaction is ATP + protein L-histidine = ADP + protein N-phospho-L-histidine.. In terms of biological role, member of the two-component regulatory system CarS/CarR that regulates the expression of multiple genes involved in calcium signaling and homeostasis including CarO and CarP. May function as a membrane-associated protein kinase that phosphorylates CarR in response to environmental signals leading to activation of specific gene promoters. The sequence is that of Sensor protein kinase CarS (carS) from Pseudomonas aeruginosa (strain ATCC 15692 / DSM 22644 / CIP 104116 / JCM 14847 / LMG 12228 / 1C / PRS 101 / PAO1).